Consider the following 89-residue polypeptide: Large ribosomal subunit protein eL34 (89 aa).

Belongs to the eukaryotic ribosomal protein eL34 family.

This Methanococcus vannielii (strain ATCC 35089 / DSM 1224 / JCM 13029 / OCM 148 / SB) protein is Large ribosomal subunit protein eL34.